The chain runs to 1072 residues: DNA-directed RNA polymerase subunit beta (1072 aa).

This sequence belongs to the RNA polymerase beta chain family. In terms of assembly, in plastids the minimal PEP RNA polymerase catalytic core is composed of four subunits: alpha, beta, beta', and beta''. When a (nuclear-encoded) sigma factor is associated with the core the holoenzyme is formed, which can initiate transcription.

The protein localises to the plastid. The protein resides in the chloroplast. The catalysed reaction is RNA(n) + a ribonucleoside 5'-triphosphate = RNA(n+1) + diphosphate. In terms of biological role, DNA-dependent RNA polymerase catalyzes the transcription of DNA into RNA using the four ribonucleoside triphosphates as substrates. The sequence is that of DNA-directed RNA polymerase subunit beta from Barbarea verna (Land cress).